A 446-amino-acid polypeptide reads, in one-letter code: SAAALALLLCAGQVIALPVNSPMNKGDTEVMKCIVEVISDTLSKPSPMPVSQECFETLRGDERILSILRHQNLLKELQDLALQGAKERSHQQKKQSSYEDELSEVLEKQNDQAELKEGTEEASSKEAAEKRGDSKEVEKNDEDADGAKPQASLEPPXXXEAEDQTPGEEEAASTHPLASLPSKKRPGAQAEEDHEGPSQGPVDREKGPSAEQGPQAEREEEEEAEAGEKAVPEEEGPRSEAFDSHPSLGYKEMQRGWPQAPAMDGAGKTGAEEAQPPEGKGAREHSRQEEEEETAGAPQGLFRGGKRGEPAQEEEERLSEEWENAKRWSKMDRLAKELTAEKRLQGEEEEEEEEEDPDRSMKLSFRAPAYGFRGPGLQLRRGWRPSSREDSVEAGLPLQVRXYLEEKKEEEGSANRRPEDQELESLSAIEAELEKVAPQLQSLRRG.

The N-terminal stretch at 1-16 is a signal peptide; it reads SAAALALLLCAGQVIA. A disulfide bridge links Cys-33 with Cys-54. The segment at 85–426 is disordered; it reads AKERSHQQKK…RPEDQELESL (342 aa). Ser-97 bears the Phosphoserine mark. Over residues 105–138 the composition is skewed to basic and acidic residues; it reads VLEKQNDQAELKEGTEEASSKEAAEKRGDSKEVE. Acidic residues predominate over residues 160-171; sequence EAEDQTPGEEEA. At Ser-209 the chain carries Phosphoserine. Over residues 226-243 the composition is skewed to basic and acidic residues; that stretch reads AGEKAVPEEEGPRSEAFD. Ser-286 bears the Phosphoserine mark. Glycine amide is present on Gly-304. A Phosphoserine modification is found at Ser-319. The segment covering 319–346 has biased composition (basic and acidic residues); that stretch reads SEEWENAKRWSKMDRLAKELTAEKRLQG. A compositionally biased stretch (acidic residues) spans 347–357; that stretch reads EEEEEEEEEDP. The residue at position 360 (Ser-360) is a Phosphoserine. Residue Met-361 is modified to Methionine sulfoxide. Ser-387, Ser-391, Ser-413, and Ser-427 each carry phosphoserine. Basic and acidic residues predominate over residues 403–420; that stretch reads YLEEKKEEEGSANRRPED. An O-linked (Xyl...) (chondroitin sulfate) serine glycan is attached at Ser-413.

Belongs to the chromogranin/secretogranin protein family. In terms of assembly, self-interacts; self-assembly is promoted in vitro by chondroitin sulfate attachment which occurs at mildly acidic pH conditions. Interacts with SCG3. Interacts with ITPR1 in the secretory granules. Post-translationally, O-glycosylated; contains chondroitin sulfate (CS). CS attachment is pH-dependent, being observed at mildly acidic conditions of pH 5 but not at neutral pH, and promotes self-assembly in vitro. Parathyroid CHGA is sulfated on tyrosine residues, whereas adrenal CHGA seems to be mainly sulfated on oligosaccharide residues.

It localises to the secreted. The protein localises to the cytoplasmic vesicle. Its subcellular location is the secretory vesicle. The protein resides in the neuronal dense core vesicle. In terms of biological role, strongly inhibits glucose induced insulin release from the pancreas. Inhibits low calcium-stimulated parathyroid cell secretion. Its function is as follows. Inhibits catecholamine release from chromaffin cells and noradrenergic neurons by acting as a non-competitive nicotinic cholinergic antagonist. Can induce mast cell migration, degranulation and production of cytokines and chemokines. Functionally, regulates granule biogenesis in endocrine cells by up-regulating the transcription of protease nexin 1 (SERPINE2) via a cAMP-PKA-SP1 pathway. This leads to inhibition of granule protein degradation in the Golgi complex which in turn promotes granule formation. This is Chromogranin-A (CHGA) from Sus scrofa (Pig).